Consider the following 322-residue polypeptide: Transaldolase (322 aa).

Lys-136 serves as the catalytic Schiff-base intermediate with substrate.

The protein belongs to the transaldolase family. Type 1 subfamily. In terms of assembly, homodimer.

The protein localises to the cytoplasm. The catalysed reaction is D-sedoheptulose 7-phosphate + D-glyceraldehyde 3-phosphate = D-erythrose 4-phosphate + beta-D-fructose 6-phosphate. It participates in carbohydrate degradation; pentose phosphate pathway; D-glyceraldehyde 3-phosphate and beta-D-fructose 6-phosphate from D-ribose 5-phosphate and D-xylulose 5-phosphate (non-oxidative stage): step 2/3. In terms of biological role, transaldolase is important for the balance of metabolites in the pentose-phosphate pathway. This is Transaldolase from Xanthomonas euvesicatoria pv. vesicatoria (strain 85-10) (Xanthomonas campestris pv. vesicatoria).